We begin with the raw amino-acid sequence, 218 residues long: Peptide methionine sulfoxide reductase MsrA (218 aa).

Cys-54 is a catalytic residue.

Belongs to the MsrA Met sulfoxide reductase family.

It catalyses the reaction L-methionyl-[protein] + [thioredoxin]-disulfide + H2O = L-methionyl-(S)-S-oxide-[protein] + [thioredoxin]-dithiol. The catalysed reaction is [thioredoxin]-disulfide + L-methionine + H2O = L-methionine (S)-S-oxide + [thioredoxin]-dithiol. Functionally, has an important function as a repair enzyme for proteins that have been inactivated by oxidation. Catalyzes the reversible oxidation-reduction of methionine sulfoxide in proteins to methionine. This chain is Peptide methionine sulfoxide reductase MsrA, found in Azorhizobium caulinodans (strain ATCC 43989 / DSM 5975 / JCM 20966 / LMG 6465 / NBRC 14845 / NCIMB 13405 / ORS 571).